A 210-amino-acid polypeptide reads, in one-letter code: Guanylate kinase (210 aa).

Positions 6 to 186 constitute a Guanylate kinase-like domain; sequence GVILVLSSPS…TADRISNILR (181 aa). Position 13–20 (13–20) interacts with ATP; sequence SPSGCGKT.

It belongs to the guanylate kinase family.

The protein resides in the cytoplasm. It carries out the reaction GMP + ATP = GDP + ADP. Essential for recycling GMP and indirectly, cGMP. The sequence is that of Guanylate kinase from Anaplasma phagocytophilum (strain HZ).